The sequence spans 500 residues: ATP synthase subunit alpha (500 aa).

Residue 169 to 176 (GDRQTGKT) participates in ATP binding.

The protein belongs to the ATPase alpha/beta chains family. As to quaternary structure, F-type ATPases have 2 components, CF(1) - the catalytic core - and CF(0) - the membrane proton channel. CF(1) has five subunits: alpha(3), beta(3), gamma(1), delta(1), epsilon(1). CF(0) has three main subunits: a(1), b(2) and c(9-12). The alpha and beta chains form an alternating ring which encloses part of the gamma chain. CF(1) is attached to CF(0) by a central stalk formed by the gamma and epsilon chains, while a peripheral stalk is formed by the delta and b chains.

The protein localises to the cell membrane. The catalysed reaction is ATP + H2O + 4 H(+)(in) = ADP + phosphate + 5 H(+)(out). In terms of biological role, produces ATP from ADP in the presence of a proton gradient across the membrane. The alpha chain is a regulatory subunit. The chain is ATP synthase subunit alpha from Lactococcus lactis subsp. cremoris (strain MG1363).